We begin with the raw amino-acid sequence, 64 residues long: Large ribosomal subunit protein bL35 (64 aa).

Residues 1–54 (MPKIKSNSGAAKRFKKTAHGFKHKQSFRSHILTKKSTKRKRQLRGMKQIHDADK) are disordered. Basic residues predominate over residues 12 to 44 (KRFKKTAHGFKHKQSFRSHILTKKSTKRKRQLR).

It belongs to the bacterial ribosomal protein bL35 family.

The protein is Large ribosomal subunit protein bL35 of Chromohalobacter salexigens (strain ATCC BAA-138 / DSM 3043 / CIP 106854 / NCIMB 13768 / 1H11).